The chain runs to 144 residues: Large ribosomal subunit protein uL13 (144 aa).

Belongs to the universal ribosomal protein uL13 family. In terms of assembly, part of the 50S ribosomal subunit.

In terms of biological role, this protein is one of the early assembly proteins of the 50S ribosomal subunit, although it is not seen to bind rRNA by itself. It is important during the early stages of 50S assembly. This Clostridium acetobutylicum (strain ATCC 824 / DSM 792 / JCM 1419 / IAM 19013 / LMG 5710 / NBRC 13948 / NRRL B-527 / VKM B-1787 / 2291 / W) protein is Large ribosomal subunit protein uL13.